Reading from the N-terminus, the 661-residue chain is Methyl-accepting chemotaxis protein McpA (661 aa).

Residues 1–16 (MKKILQLIKQRSITRK) lie on the Cytoplasmic side of the membrane. The chain crosses the membrane as a helical span at residues 17-37 (LLVSFLSILIIPVVILAIFAY). Residues 38–281 (QSASSSLDRQ…IHEAAQPVLH (244 aa)) lie on the Extracellular side of the membrane. A Cache domain is found at 152 to 228 (ITDPYKTAST…QSGTELKGDW (77 aa)). A helical membrane pass occupies residues 282–302 (LALIVLAAAIIIGIIVMTLII). Positions 303–355 (RSITTPLKQLVGSSKRISEGDLTETIDIRSKDELGELGKSFNNMASSLRSLIH) constitute an HAMP domain. At 303–661 (RSITTPLKQL…RDMTKRFKIE (359 aa)) the chain is on the cytoplasmic side. Glutamate methyl ester (Glu) is present on glutamate 370. A Methyl-accepting transducer domain is found at 374–610 (SAAQTSKATE…EVSGASEHIA (237 aa)). 2 positions are modified to deamidated glutamine: glutamine 593 and glutamine 594. Glutamine 594 bears the Glutamate methyl ester (Gln) mark. Glutamate methyl ester (Glu) is present on residues glutamate 629 and glutamate 636.

The protein belongs to the methyl-accepting chemotaxis (MCP) protein family. In terms of assembly, interacts with FloT. In terms of processing, deamidated by CheD on Gln-593 and Gln-594, producing glutamate residues. The glutamate residues are then methylated. Other additional sites are deamidated and methylated as well.

The protein resides in the cell membrane. It localises to the membrane raft. In terms of biological role, chemotactic-signal transducers respond to changes in the concentration of attractants and repellents in the environment, transduce a signal from the outside to the inside of the cell, and facilitate sensory adaptation through the variation of the level of methylation. All amino acids serve as attractants in B.subtilis, they appear to cause an increase in the turnover methyl groups, leading to methylation of an unidentified acceptor, while repellents have been shown to cause a decrease in methyl group turnover. The methyl groups are added by a methyltransferase and removed by a methylesterase. McpA is required for taxis towards glucose and alpha-methylglucoside. This chain is Methyl-accepting chemotaxis protein McpA (mcpA), found in Bacillus subtilis (strain 168).